The sequence spans 307 residues: UPF0276 protein PM0211 (307 aa).

Belongs to the UPF0276 family.

The protein is UPF0276 protein PM0211 of Pasteurella multocida (strain Pm70).